Consider the following 3140-residue polypeptide: Genome polyprotein (3140 aa).

The 144-residue stretch at 165–308 (RMSEASLQLF…KEQSNEIIHY (144 aa)) folds into the Peptidase S30 domain. Catalysis depends on for P1 proteinase activity residues His-216, Asp-225, and Ser-259. The Involved in interaction with stylet and aphid transmission motif lies at 360–363 (KITC). Positions 618–620 (PTK) match the Involved in virions binding and aphid transmission motif. Residues 644–766 (MFIAKAGYCY…DSNMKTYLVG (123 aa)) enclose the Peptidase C6 domain. Residues Cys-652 and His-725 each act as for helper component proteinase activity in the active site. Positions 1240-1392 (EVMHGSHQDI…TQKEVKVIVE (153 aa)) constitute a Helicase ATP-binding domain. Residue 1253–1260 (GAVGSGKS) participates in ATP binding. A DECH box motif is present at residues 1342 to 1345 (DECH). One can recognise a Helicase C-terminal domain in the interval 1411 to 1570 (DILKHGVNVL…GLPVMTNGVS (160 aa)). The Nuclear localization signal motif lies at 1897–1904 (KKGKSKGK). Position 1919 is an O-(5'-phospho-RNA)-tyrosine (Tyr-1919). Residues 2050–2268 (SKSLFRGLRD…VCWGSLQLKR (219 aa)) form the Peptidase C4 domain. Catalysis depends on for nuclear inclusion protein A activity residues His-2095, Asp-2130, and Cys-2200. In terms of domain architecture, RdRp catalytic spans 2534–2658 (WIYCDADGSQ…AVHPAYESIY (125 aa)). O-linked (GlcNAc) threonine; by host glycans are attached at residues Thr-2829 and Thr-2834. At Ser-2835 the chain carries Phosphoserine. O-linked (GlcNAc) threonine; by host glycans are attached at residues Thr-2851, Thr-2863, Thr-2864, and Thr-2868. A glycan (O-linked (GlcNAc) serine; by host) is linked at Ser-2875. Phosphoserine occurs at positions 2891, 2911, and 2928. Phosphothreonine occurs at positions 3064 and 3123.

This sequence belongs to the potyviridae genome polyprotein family. As to quaternary structure, interacts with host eIF4E protein (via cap-binding region); this interaction mediates the translation of the VPg-viral RNA conjugates. Part of a complex that comprises VPg, RNA, host EIF4E and EIF4G; this interaction mediates the translation of the VPg-viral RNA conjugates. Post-translationally, VPg is uridylylated by the polymerase and is covalently attached to the 5'-end of the genomic RNA. This uridylylated form acts as a nucleotide-peptide primer for the polymerase. In terms of processing, genome polyprotein of potyviruses undergoes post-translational proteolytic processing by the main proteinase NIa-pro resulting in the production of at least ten individual proteins. The P1 proteinase and the HC-pro cleave only their respective C-termini autocatalytically. 6K1 is essential for proper proteolytic separation of P3 from CI.

The protein localises to the host cytoplasmic vesicle. It localises to the host nucleus. Its subcellular location is the virion. The catalysed reaction is RNA(n) + a ribonucleoside 5'-triphosphate = RNA(n+1) + diphosphate. It catalyses the reaction Hydrolyzes glutaminyl bonds, and activity is further restricted by preferences for the amino acids in P6 - P1' that vary with the species of potyvirus, e.g. Glu-Xaa-Xaa-Tyr-Xaa-Gln-|-(Ser or Gly) for the enzyme from tobacco etch virus. The natural substrate is the viral polyprotein, but other proteins and oligopeptides containing the appropriate consensus sequence are also cleaved.. It carries out the reaction Hydrolyzes a Gly-|-Gly bond at its own C-terminus, commonly in the sequence -Tyr-Xaa-Val-Gly-|-Gly, in the processing of the potyviral polyprotein.. Required for aphid transmission and also has proteolytic activity. Only cleaves a Gly-Gly dipeptide at its own C-terminus. Interacts with virions and aphid stylets. Acts as a suppressor of RNA-mediated gene silencing, also known as post-transcriptional gene silencing (PTGS), a mechanism of plant viral defense that limits the accumulation of viral RNAs. May have RNA-binding activity. In terms of biological role, has helicase activity. It may be involved in replication. Functionally, indispensable for virus replication. Reduces the abundance of host transcripts related to jasmonic acid biosynthesis therefore altering the host defenses. In order to increase its own stability, decreases host protein degradation pathways. Its function is as follows. Indispensable for virus replication. Mediates the cap-independent, EIF4E-dependent translation of viral genomic RNAs. Binds to the cap-binding site of host EIF4E and thus interferes with the host EIF4E-dependent mRNA export and translation. VPg-RNA directly binds EIF4E and is a template for transcription. Also forms trimeric complexes with EIF4E-EIF4G, which are templates for translation. In terms of biological role, has RNA-binding and proteolytic activities. Functionally, an RNA-dependent RNA polymerase that plays an essential role in the virus replication. Its function is as follows. Involved in aphid transmission, cell-to-cell and systemis movement, encapsidation of the viral RNA and in the regulation of viral RNA amplification. This Prunus armeniaca (Apricot) protein is Genome polyprotein.